Consider the following 210-residue polypeptide: Dephospho-CoA kinase (210 aa).

The DPCK domain maps to 4-202; that stretch reads WVGLTGGIGS…AFYSGIFASK (199 aa). An ATP-binding site is contributed by 12–17; it reads GSGKSA.

This sequence belongs to the CoaE family.

The protein resides in the cytoplasm. It catalyses the reaction 3'-dephospho-CoA + ATP = ADP + CoA + H(+). The protein operates within cofactor biosynthesis; coenzyme A biosynthesis; CoA from (R)-pantothenate: step 5/5. Functionally, catalyzes the phosphorylation of the 3'-hydroxyl group of dephosphocoenzyme A to form coenzyme A. This Neisseria gonorrhoeae protein is Dephospho-CoA kinase.